The chain runs to 427 residues: Gamma-glutamyl phosphate reductase (427 aa).

The protein belongs to the gamma-glutamyl phosphate reductase family.

The protein localises to the cytoplasm. It carries out the reaction L-glutamate 5-semialdehyde + phosphate + NADP(+) = L-glutamyl 5-phosphate + NADPH + H(+). It participates in amino-acid biosynthesis; L-proline biosynthesis; L-glutamate 5-semialdehyde from L-glutamate: step 2/2. Its function is as follows. Catalyzes the NADPH-dependent reduction of L-glutamate 5-phosphate into L-glutamate 5-semialdehyde and phosphate. The product spontaneously undergoes cyclization to form 1-pyrroline-5-carboxylate. In Streptomyces griseus subsp. griseus (strain JCM 4626 / CBS 651.72 / NBRC 13350 / KCC S-0626 / ISP 5235), this protein is Gamma-glutamyl phosphate reductase.